The primary structure comprises 280 residues: Shikimate dehydrogenase (NADP(+)) (280 aa).

Shikimate-binding positions include Ser15–Ser17 and Thr62. Residue Lys66 is the Proton acceptor of the active site. Positions 88 and 104 each coordinate shikimate. NADP(+)-binding positions include Gly128–Ala132, Asn151–Arg156, and Ile222. A shikimate-binding site is contributed by Tyr224. Gly245 lines the NADP(+) pocket.

This sequence belongs to the shikimate dehydrogenase family. In terms of assembly, homodimer.

It carries out the reaction shikimate + NADP(+) = 3-dehydroshikimate + NADPH + H(+). It participates in metabolic intermediate biosynthesis; chorismate biosynthesis; chorismate from D-erythrose 4-phosphate and phosphoenolpyruvate: step 4/7. Its function is as follows. Involved in the biosynthesis of the chorismate, which leads to the biosynthesis of aromatic amino acids. Catalyzes the reversible NADPH linked reduction of 3-dehydroshikimate (DHSA) to yield shikimate (SA). The sequence is that of Shikimate dehydrogenase (NADP(+)) from Methanosarcina mazei (strain ATCC BAA-159 / DSM 3647 / Goe1 / Go1 / JCM 11833 / OCM 88) (Methanosarcina frisia).